The chain runs to 151 residues: Ribonuclease H (151 aa).

An RNase H type-1 domain is found at 1-143 (MSDVVVIHTD…ADVLATRGLQ (143 aa)). Mg(2+) contacts are provided by D10, E49, D71, and D135.

The protein belongs to the RNase H family. As to quaternary structure, monomer. Mg(2+) serves as cofactor.

The protein resides in the cytoplasm. It carries out the reaction Endonucleolytic cleavage to 5'-phosphomonoester.. Functionally, endonuclease that specifically degrades the RNA of RNA-DNA hybrids. This Mycolicibacterium gilvum (strain PYR-GCK) (Mycobacterium gilvum (strain PYR-GCK)) protein is Ribonuclease H.